The sequence spans 247 residues: 2,3-bisphosphoglycerate-dependent phosphoglycerate mutase (247 aa).

Substrate is bound by residues 8–15 (RHGESTWN), 21–22 (TG), Arg60, 87–90 (ERHY), Lys98, 114–115 (RR), and 183–184 (GN). His9 functions as the Tele-phosphohistidine intermediate in the catalytic mechanism. The active-site Proton donor/acceptor is the Glu87.

This sequence belongs to the phosphoglycerate mutase family. BPG-dependent PGAM subfamily. In terms of assembly, homodimer.

It catalyses the reaction (2R)-2-phosphoglycerate = (2R)-3-phosphoglycerate. It functions in the pathway carbohydrate degradation; glycolysis; pyruvate from D-glyceraldehyde 3-phosphate: step 3/5. In terms of biological role, catalyzes the interconversion of 2-phosphoglycerate and 3-phosphoglycerate. The sequence is that of 2,3-bisphosphoglycerate-dependent phosphoglycerate mutase from Paracidovorax citrulli (strain AAC00-1) (Acidovorax citrulli).